We begin with the raw amino-acid sequence, 185 residues long: ATP synthase subunit b (185 aa).

Residues 27 to 47 (GALIWKGLNILAFLGIVYYFG) form a helical membrane-spanning segment.

Belongs to the ATPase B chain family. In terms of assembly, F-type ATPases have 2 components, F(1) - the catalytic core - and F(0) - the membrane proton channel. F(1) has five subunits: alpha(3), beta(3), gamma(1), delta(1), epsilon(1). F(0) has three main subunits: a(1), b(2) and c(10-14). The alpha and beta chains form an alternating ring which encloses part of the gamma chain. F(1) is attached to F(0) by a central stalk formed by the gamma and epsilon chains, while a peripheral stalk is formed by the delta and b chains.

It is found in the cell inner membrane. Its function is as follows. F(1)F(0) ATP synthase produces ATP from ADP in the presence of a proton or sodium gradient. F-type ATPases consist of two structural domains, F(1) containing the extramembraneous catalytic core and F(0) containing the membrane proton channel, linked together by a central stalk and a peripheral stalk. During catalysis, ATP synthesis in the catalytic domain of F(1) is coupled via a rotary mechanism of the central stalk subunits to proton translocation. In terms of biological role, component of the F(0) channel, it forms part of the peripheral stalk, linking F(1) to F(0). The polypeptide is ATP synthase subunit b (Aquifex aeolicus (strain VF5)).